A 609-amino-acid chain; its full sequence is Proteasome-associated ATPase (609 aa).

Positions 1–22 are disordered; sequence MGESERSEAFNPPREAGMSSGD. A coiled-coil region spans residues 20-96; sequence SGDIAELEQL…LREEVDRLGQ (77 aa). Residue 296-301 coordinates ATP; sequence GCGKTL. Residues 608 to 609 form a docks into pockets in the proteasome alpha-ring region; the sequence is YL.

Belongs to the AAA ATPase family. Homohexamer. Assembles into a hexameric ring structure that caps the 20S proteasome core. Strongly interacts with the prokaryotic ubiquitin-like protein Pup through a hydrophobic interface; the interacting region of ARC lies in its N-terminal coiled-coil domain. There is one Pup binding site per ARC hexamer ring. Upon ATP-binding, the C-terminus of ARC interacts with the alpha-rings of the proteasome core, possibly by binding to the intersubunit pockets.

The protein operates within protein degradation; proteasomal Pup-dependent pathway. Its function is as follows. ATPase which is responsible for recognizing, binding, unfolding and translocation of pupylated proteins into the bacterial 20S proteasome core particle. May be essential for opening the gate of the 20S proteasome via an interaction with its C-terminus, thereby allowing substrate entry and access to the site of proteolysis. Thus, the C-termini of the proteasomal ATPase may function like a 'key in a lock' to induce gate opening and therefore regulate proteolysis. The polypeptide is Proteasome-associated ATPase (Mycobacterium leprae (strain Br4923)).